The chain runs to 323 residues: o-succinylbenzoate synthase (323 aa).

The active-site Proton donor is the lysine 134. Aspartate 162, glutamate 191, and aspartate 214 together coordinate Mg(2+). Lysine 236 serves as the catalytic Proton acceptor.

It belongs to the mandelate racemase/muconate lactonizing enzyme family. MenC type 1 subfamily. It depends on a divalent metal cation as a cofactor.

It catalyses the reaction (1R,6R)-6-hydroxy-2-succinyl-cyclohexa-2,4-diene-1-carboxylate = 2-succinylbenzoate + H2O. It functions in the pathway quinol/quinone metabolism; 1,4-dihydroxy-2-naphthoate biosynthesis; 1,4-dihydroxy-2-naphthoate from chorismate: step 4/7. Its pathway is quinol/quinone metabolism; menaquinone biosynthesis. In terms of biological role, converts 2-succinyl-6-hydroxy-2,4-cyclohexadiene-1-carboxylate (SHCHC) to 2-succinylbenzoate (OSB). In Yersinia pestis bv. Antiqua (strain Antiqua), this protein is o-succinylbenzoate synthase.